Reading from the N-terminus, the 355-residue chain is Poly(3-hydroxyalkanoate) polymerase subunit PhaC (355 aa).

In terms of domain architecture, AB hydrolase-1 spans 69 to 334 (PLLIVYALVN…LAFPGGHIGI (266 aa)). The active site involves cysteine 149.

It belongs to the PHA/PHB synthase family. Type III PhaC subfamily. As to quaternary structure, a large complex of PhaC and PhaE; the ratio of the subunits has been estimated to be from 1:1 to 4:1, with more PhaE than PhaC.

Its subcellular location is the cytoplasm. It catalyses the reaction (3R)-3-hydroxybutanoyl-CoA + [(3R)-hydroxybutanoate](n) = [(3R)-hydroxybutanoate](n+1) + CoA. It participates in biopolymer metabolism; poly-(R)-3-hydroxybutanoate biosynthesis. Polymerizes D(-)-3-hydroxybutyryl-CoA to create polyhydroxybutyrate (PHB) which consists of thousands of hydroxybutyrate molecules linked end to end. This subunit has catalytic activity that is enhanced 100-fold by PhaE, the non-catalytic subunit. This chain is Poly(3-hydroxyalkanoate) polymerase subunit PhaC, found in Allochromatium vinosum (strain ATCC 17899 / DSM 180 / NBRC 103801 / NCIMB 10441 / D) (Chromatium vinosum).